The sequence spans 193 residues: Potassium-transporting ATPase KdpC subunit (193 aa).

Residues A10–I30 form a helical membrane-spanning segment.

This sequence belongs to the KdpC family. As to quaternary structure, the system is composed of three essential subunits: KdpA, KdpB and KdpC.

The protein resides in the cell membrane. Its function is as follows. Part of the high-affinity ATP-driven potassium transport (or Kdp) system, which catalyzes the hydrolysis of ATP coupled with the electrogenic transport of potassium into the cytoplasm. This subunit acts as a catalytic chaperone that increases the ATP-binding affinity of the ATP-hydrolyzing subunit KdpB by the formation of a transient KdpB/KdpC/ATP ternary complex. The sequence is that of Potassium-transporting ATPase KdpC subunit from Herpetosiphon aurantiacus (strain ATCC 23779 / DSM 785 / 114-95).